The following is a 349-amino-acid chain: UDP-N-acetylenolpyruvoylglucosamine reductase (349 aa).

Positions 25–197 constitute an FAD-binding PCMH-type domain; the sequence is GIAATARYAA…VAVTFRLPKR (173 aa). The active site involves Arg173. Residue Ser249 is the Proton donor of the active site. Glu345 is a catalytic residue.

It belongs to the MurB family. It depends on FAD as a cofactor.

The protein localises to the cytoplasm. The enzyme catalyses UDP-N-acetyl-alpha-D-muramate + NADP(+) = UDP-N-acetyl-3-O-(1-carboxyvinyl)-alpha-D-glucosamine + NADPH + H(+). The protein operates within cell wall biogenesis; peptidoglycan biosynthesis. Its function is as follows. Cell wall formation. The protein is UDP-N-acetylenolpyruvoylglucosamine reductase of Burkholderia vietnamiensis (strain G4 / LMG 22486) (Burkholderia cepacia (strain R1808)).